Here is a 907-residue protein sequence, read N- to C-terminus: MPRQRAPKEEEAELLTKQERSTRSSEDASDASVSSISTTSLVLEHINNPAINGTSRSRRGEKYTDEDDEAQEAFDVEDGRYKAPVAVDKKTRRWLWIVGIACVTGWALALVFFLMSGSYKHVSTRPHDPLASSTKGSGKKITMDDVFGGSFYAQQQSVKWIAGPNGEDGLLLEKNTGNAGYLVVEDIRNKGDGDSSAKKTKLMQKSSFDVDGKLVRPNEVWPSKDFKKVLVQSDFEKNWRHSGTGKYWIFDVATQTGEPLDPENQDGRVQLASLSPQSDAVVFTRDNNMYLRKLDSKEVIQITRDGGSELFYGIPDWVYEEEVFQGNSATWWSEDGKYIAFLRTDESTVPTYPVQYFVSRPSGNKPKAGEENYPEVRNIKYPKAGAPNPIVALQFYDVEKAEVFSVEIEDDFRDNNRLITEIVWAGKTKQVLVRETNRESDILKVVLMDVEKRTGKTVRTENVAELDGGWFEVSQKTTFVPADPDNGRKDDGYIDTIIHEGYDHIGYFTPLDNDKPVLLSQGEWEVVDAPSRVDLKNNMVYYVSTEKSSMERHAYSVFLNGTGTSEVVENSGSGYYEASFSAGGSYALITYQGPGIPWQKIISTPSNKDKFEKVLEENKHLDRFVREREMPILNYQTIDVDGFKLNVLERRPPHFNEKKKYPVLFYQYSGPNSQEVNKKFHVDFQAYVAANLGYIVVTVDGRGTGFLGRKLRCITRGNLGYYEAHDQIAAAKIWASKKYVDADRLAIWGWSFGGFNTLKTLEQDGGQTFKYGMAVAPVTDWRYYDSIYTERFMHMPQNNAAGYDNSTITDVASLAKNTRFLIMHGVADDNVHMQNTLTLLDRLDLAGVENYDVHVFPDSDHSIYFHNANRIVYDKLRWWLINAFNGEWAKIKTAEPKSQVDARLERR.

A compositionally biased stretch (basic and acidic residues) spans 1 to 26 (MPRQRAPKEEEAELLTKQERSTRSSE). The disordered stretch occupies residues 1–70 (MPRQRAPKEE…EKYTDEDDEA (70 aa)). Topologically, residues 1-93 (MPRQRAPKEE…PVAVDKKTRR (93 aa)) are cytoplasmic. A compositionally biased stretch (low complexity) spans 30-44 (DASVSSISTTSLVLE). A helical; Signal-anchor for type II membrane protein membrane pass occupies residues 94–114 (WLWIVGIACVTGWALALVFFL). At 115-907 (MSGSYKHVST…SQVDARLERR (793 aa)) the chain is on the vacuolar side. N560 carries an N-linked (GlcNAc...) asparagine glycan. The active-site Charge relay system is the S751. An N-linked (GlcNAc...) asparagine glycan is attached at N805. Catalysis depends on charge relay system residues D828 and H861.

The protein belongs to the peptidase S9B family.

It is found in the vacuole membrane. The catalysed reaction is Release of an N-terminal dipeptide, Xaa-Yaa-|-Zaa-, from a polypeptide, preferentially when Yaa is Pro, provided Zaa is neither Pro nor hydroxyproline.. Functionally, type IV dipeptidyl-peptidase which removes N-terminal dipeptides sequentially from polypeptides having unsubstituted N-termini provided that the penultimate residue is proline. This chain is Probable dipeptidyl-aminopeptidase B (dapB), found in Pyrenophora teres f. teres (strain 0-1) (Barley net blotch fungus).